Here is a 388-residue protein sequence, read N- to C-terminus: Chorismate synthase (388 aa).

2 residues coordinate NADP(+): R39 and R45. FMN is bound by residues 130-132 (RSS), 251-252 (NA), G296, 311-315 (KPIPT), and R337.

This sequence belongs to the chorismate synthase family. Homotetramer. FMNH2 serves as cofactor.

It carries out the reaction 5-O-(1-carboxyvinyl)-3-phosphoshikimate = chorismate + phosphate. The protein operates within metabolic intermediate biosynthesis; chorismate biosynthesis; chorismate from D-erythrose 4-phosphate and phosphoenolpyruvate: step 7/7. In terms of biological role, catalyzes the anti-1,4-elimination of the C-3 phosphate and the C-6 proR hydrogen from 5-enolpyruvylshikimate-3-phosphate (EPSP) to yield chorismate, which is the branch point compound that serves as the starting substrate for the three terminal pathways of aromatic amino acid biosynthesis. This reaction introduces a second double bond into the aromatic ring system. This chain is Chorismate synthase, found in Lactococcus lactis subsp. cremoris (strain SK11).